We begin with the raw amino-acid sequence, 122 residues long: Small ribosomal subunit protein uS13 (122 aa).

Residues 98–122 (VRGQRTHTNARTRKGPAKAIAGKKK) form a disordered region.

Belongs to the universal ribosomal protein uS13 family. Part of the 30S ribosomal subunit. Forms a loose heterodimer with protein S19. Forms two bridges to the 50S subunit in the 70S ribosome.

Functionally, located at the top of the head of the 30S subunit, it contacts several helices of the 16S rRNA. In the 70S ribosome it contacts the 23S rRNA (bridge B1a) and protein L5 of the 50S subunit (bridge B1b), connecting the 2 subunits; these bridges are implicated in subunit movement. Contacts the tRNAs in the A and P-sites. The protein is Small ribosomal subunit protein uS13 of Roseobacter denitrificans (strain ATCC 33942 / OCh 114) (Erythrobacter sp. (strain OCh 114)).